The sequence spans 541 residues: Anthranilate synthase component 1 (541 aa).

L-tryptophan is bound by residues S61 and 311 to 313; that span reads PYM. 348 to 349 lines the chorismate pocket; the sequence is GT. E381 is a Mg(2+) binding site. Residues Y469, R489, 503–505, and G505 each bind chorismate; that span reads GAG. Position 518 (E518) interacts with Mg(2+).

Belongs to the anthranilate synthase component I family. As to quaternary structure, heterotetramer consisting of two non-identical subunits: a beta subunit (TrpG) and a large alpha subunit (TrpE). The cofactor is Mg(2+).

It catalyses the reaction chorismate + L-glutamine = anthranilate + pyruvate + L-glutamate + H(+). It participates in amino-acid biosynthesis; L-tryptophan biosynthesis; L-tryptophan from chorismate: step 1/5. With respect to regulation, feedback inhibited by tryptophan. Part of a heterotetrameric complex that catalyzes the two-step biosynthesis of anthranilate, an intermediate in the biosynthesis of L-tryptophan. In the first step, the glutamine-binding beta subunit (TrpG) of anthranilate synthase (AS) provides the glutamine amidotransferase activity which generates ammonia as a substrate that, along with chorismate, is used in the second step, catalyzed by the large alpha subunit of AS (TrpE) to produce anthranilate. In the absence of TrpG, TrpE can synthesize anthranilate directly from chorismate and high concentrations of ammonia. The chain is Anthranilate synthase component 1 (trpE) from Vibrio parahaemolyticus serotype O3:K6 (strain RIMD 2210633).